Consider the following 1075-residue polypeptide: Atos homolog protein A (1075 aa).

Residues 24–32 are transactivation domain 1 (TAD1); sequence ALLITEGRT. Disordered stretches follow at residues 430-469, 570-592, and 703-766; these read FGSPEFGSPGDSREGKVREKSETRPGETCTSHSLYPRQPA, YSPQEKPLKPEVRTQHQNHPDSI, and LNKN…PHSV. Over residues 440-454 the composition is skewed to basic and acidic residues; it reads DSREGKVREKSETRP. Polar residues predominate over residues 703 to 712; it reads LNKNKTNCSS. A compositionally biased stretch (basic and acidic residues) spans 746 to 759; sequence DRLKTEQEAKRDSG. The required for macropage invasion stretch occupies residues 878–935; it reads LLGNFEESVLNYRLDPLGIVDGFTAEVGASGTFCPTHLTLPVEVSFYSVSDDNAPSPY. A transactivation domain 2 (TAD2) region spans residues 962–970; the sequence is FNPNKTVVK.

It belongs to the ATOS family.

Its subcellular location is the nucleus. Functionally, transcription regulator that syncronizes transcriptional and translational programs to promote macrophage invasion of tissues. In Mus musculus (Mouse), this protein is Atos homolog protein A (Atosa).